Reading from the N-terminus, the 393-residue chain is Tryptophan synthase beta chain (393 aa).

Position 85 is an N6-(pyridoxal phosphate)lysine (lysine 85).

It belongs to the TrpB family. Tetramer of two alpha and two beta chains. The cofactor is pyridoxal 5'-phosphate.

The catalysed reaction is (1S,2R)-1-C-(indol-3-yl)glycerol 3-phosphate + L-serine = D-glyceraldehyde 3-phosphate + L-tryptophan + H2O. Its pathway is amino-acid biosynthesis; L-tryptophan biosynthesis; L-tryptophan from chorismate: step 5/5. Functionally, the beta subunit is responsible for the synthesis of L-tryptophan from indole and L-serine. The protein is Tryptophan synthase beta chain (trpB) of Helicobacter pylori (strain ATCC 700392 / 26695) (Campylobacter pylori).